The primary structure comprises 990 residues: Bifunctional glutamine synthetase adenylyltransferase/adenylyl-removing enzyme (990 aa).

The adenylyl removase stretch occupies residues 1–474; it reads MIFSAITADL…HYAKLFEGDP (474 aa). The segment at 478–990 is adenylyl transferase; sequence AKLPPVDYGA…FNRLIGGEDA (513 aa).

The protein belongs to the GlnE family. Requires Mg(2+) as cofactor.

It catalyses the reaction [glutamine synthetase]-O(4)-(5'-adenylyl)-L-tyrosine + phosphate = [glutamine synthetase]-L-tyrosine + ADP. The enzyme catalyses [glutamine synthetase]-L-tyrosine + ATP = [glutamine synthetase]-O(4)-(5'-adenylyl)-L-tyrosine + diphosphate. Its function is as follows. Involved in the regulation of glutamine synthetase GlnA, a key enzyme in the process to assimilate ammonia. When cellular nitrogen levels are high, the C-terminal adenylyl transferase (AT) inactivates GlnA by covalent transfer of an adenylyl group from ATP to specific tyrosine residue of GlnA, thus reducing its activity. Conversely, when nitrogen levels are low, the N-terminal adenylyl removase (AR) activates GlnA by removing the adenylyl group by phosphorolysis, increasing its activity. The regulatory region of GlnE binds the signal transduction protein PII (GlnB) which indicates the nitrogen status of the cell. The protein is Bifunctional glutamine synthetase adenylyltransferase/adenylyl-removing enzyme of Rhodopseudomonas palustris (strain TIE-1).